Here is a 708-residue protein sequence, read N- to C-terminus: Chaperonin-containing T-complex member BBS12 (708 aa).

Belongs to the TCP-1 chaperonin family. BBS12 subfamily. Component of the chaperonin-containing T-complex (TRiC), a heterooligomeric complex of about 850 to 900 kDa that forms two stacked rings, 12 to 16 nm in diameter. Interacts with MKKS.

Its subcellular location is the cell projection. The protein localises to the cilium. Functionally, component of the chaperonin-containing T-complex (TRiC), a molecular chaperone complex that assists the folding of proteins upon ATP hydrolysis. As part of the TRiC complex may play a role in the assembly of BBSome, a complex involved in ciliogenesis regulating transports vesicles to the cilia. Involved in adipogenic differentiation. In Mus musculus (Mouse), this protein is Chaperonin-containing T-complex member BBS12 (Bbs12).